Consider the following 460-residue polypeptide: Lipase member I (460 aa).

An N-terminal signal peptide occupies residues 1 to 15 (MRVYIFLCLMCWVRS). A glycan (N-linked (GlcNAc...) asparagine) is linked at asparagine 63. Serine 159 (nucleophile) is an active-site residue. Residue aspartate 183 is the Charge relay system of the active site. A disulfide bridge links cysteine 238 with cysteine 251. Catalysis depends on histidine 253, which acts as the Charge relay system. 2 disulfide bridges follow: cysteine 275/cysteine 286 and cysteine 289/cysteine 297. Asparagine 396 carries N-linked (GlcNAc...) asparagine glycosylation. A disulfide bond links cysteine 436 and cysteine 455.

The protein belongs to the AB hydrolase superfamily. Lipase family. Interacts with heparin with a high affinity. Expressed in testis. Expressed exclusively at the connecting piece of the sperm.

Its subcellular location is the cell membrane. It is found in the secreted. The catalysed reaction is 1-hexadecanoyl-2-(9Z-octadecenoyl)-sn-glycero-3-phosphate + H2O = 2-(9Z-octadecenoyl)-sn-glycero-3-phosphate + hexadecanoate + H(+). With respect to regulation, inhibited by sodium vanadate. Its function is as follows. Hydrolyzes specifically phosphatidic acid (PA) to produce 2-acyl lysophosphatidic acid (LPA; a potent bioactive lipid mediator) and fatty acid. Does not hydrolyze other phospholipids, like phosphatidylserine (PS), phosphatidylcholine (PC) and phosphatidylethanolamine (PE) or triacylglycerol (TG). This is Lipase member I (LIPI) from Homo sapiens (Human).